The following is a 104-amino-acid chain: Large ribosomal subunit protein uL24 (104 aa).

The protein belongs to the universal ribosomal protein uL24 family. As to quaternary structure, part of the 50S ribosomal subunit.

Functionally, one of two assembly initiator proteins, it binds directly to the 5'-end of the 23S rRNA, where it nucleates assembly of the 50S subunit. One of the proteins that surrounds the polypeptide exit tunnel on the outside of the subunit. The chain is Large ribosomal subunit protein uL24 from Erwinia tasmaniensis (strain DSM 17950 / CFBP 7177 / CIP 109463 / NCPPB 4357 / Et1/99).